The primary structure comprises 699 residues: Elongation factor G (699 aa).

The tr-type G domain maps to 8 to 290 (NRYRNIGICA…AVIEFLPAPD (283 aa)). Residues 17-24 (AHVDAGKT), 88-92 (DTPGH), and 142-145 (NKMD) contribute to the GTP site.

It belongs to the TRAFAC class translation factor GTPase superfamily. Classic translation factor GTPase family. EF-G/EF-2 subfamily.

The protein localises to the cytoplasm. Functionally, catalyzes the GTP-dependent ribosomal translocation step during translation elongation. During this step, the ribosome changes from the pre-translocational (PRE) to the post-translocational (POST) state as the newly formed A-site-bound peptidyl-tRNA and P-site-bound deacylated tRNA move to the P and E sites, respectively. Catalyzes the coordinated movement of the two tRNA molecules, the mRNA and conformational changes in the ribosome. The sequence is that of Elongation factor G from Alcanivorax borkumensis (strain ATCC 700651 / DSM 11573 / NCIMB 13689 / SK2).